Reading from the N-terminus, the 340-residue chain is Guanine nucleotide-binding protein G(I)/G(S)/G(T) subunit beta-3 (340 aa).

WD repeat units follow at residues 53–83 (GHLAKIYAMHWATDSKLLVSASQDGKLIVWD), 95–125 (LRSSWVMTCAYAPSGNFVACGGLDNMCSIYN), 141–170 (AHTGYLSCCRFLDDNNIVTSSGDTTCALWD), 182–212 (GHTGDCMSLAVSPDFNLFISGACDASAKLWD), 224–254 (GHESDINAICFFPNGEAICTGSDDASCRLFD), 268–298 (SIICGITSVAFSLSGRLLFAGYDDFNCNVWD), and 310–340 (GHDNRVSCLGVTADGMAVATGSWDSFLKIWN).

The protein belongs to the WD repeat G protein beta family. G proteins are composed of 3 units, alpha, beta and gamma. Interacts with RASD2.

Functionally, guanine nucleotide-binding proteins (G proteins) are involved as a modulator or transducer in various transmembrane signaling systems. The beta and gamma chains are required for the GTPase activity, for replacement of GDP by GTP, and for G protein-effector interaction. The polypeptide is Guanine nucleotide-binding protein G(I)/G(S)/G(T) subunit beta-3 (GNB3) (Homo sapiens (Human)).